Consider the following 304-residue polypeptide: Nod factor export ATP-binding protein I (304 aa).

The 231-residue stretch at 6–236 (IDFQQVEKRY…EIGCDVIEIY (231 aa)) folds into the ABC transporter domain. Residue 38-45 (GPNGAGKT) coordinates ATP.

The protein belongs to the ABC transporter superfamily. Lipooligosaccharide exporter (TC 3.A.1.102) family. The complex is composed of two ATP-binding proteins (NodI) and two transmembrane proteins (NodJ).

Its subcellular location is the cell inner membrane. In terms of biological role, part of the ABC transporter complex NodIJ involved in the export of the nodulation factors (Nod factors), the bacterial signal molecules that induce symbiosis and subsequent nodulation induction. Nod factors are LCO (lipo-chitin oligosaccharide), a modified beta-1,4-linked N-acetylglucosamine oligosaccharide. This subunit is responsible for energy coupling to the transport system. The protein is Nod factor export ATP-binding protein I of Burkholderia pseudomallei (strain 1710b).